A 31-amino-acid chain; its full sequence is Protamine CIII (31 aa).

The segment at 1–31 (MPRRRRASRPVRRRRRPRVSRRRRRGGRRRR) is disordered.

As to expression, testis.

It is found in the nucleus. Its subcellular location is the chromosome. Protamines substitute for histones in the chromatin of sperm during the haploid phase of spermatogenesis. They compact sperm DNA into a highly condensed, stable and inactive complex. The polypeptide is Protamine CIII (Oncorhynchus mykiss (Rainbow trout)).